A 160-amino-acid chain; its full sequence is Prostaglandin E synthase 3 (160 aa).

The CS domain maps to Met1–Thr90. Lys33 bears the N6-acetyllysine mark. Residue Lys35 forms a Glycyl lysine isopeptide (Lys-Gly) (interchain with G-Cter in SUMO2) linkage. Ser44 is modified (phosphoserine). Lys65 is covalently cross-linked (Glycyl lysine isopeptide (Lys-Gly) (interchain with G-Cter in SUMO2)). Phosphoserine is present on residues Ser85, Ser100, Ser113, Ser118, Ser148, and Ser151. The interval Ser124–Glu160 is disordered. Acidic residues predominate over residues Gly132 to Asp153. The short motif at Pro157 to Glu160 is the PXLE motif element.

It belongs to the p23/wos2 family. Probably forms a complex composed of chaperones HSP90 and HSP70, co-chaperones STIP1/HOP, CDC37, PPP5C, PTGES3/p23, TSC1 and client protein TSC2. Binds to the progesterone receptor. Interacts with TERT; the interaction, together with HSP90AA1, is required for correct assembly and stabilization of the telomerase holoenzyme complex. Interacts (via PXLE motif) with EGLN1/PHD2, recruiting EGLN1/PHD2 to the HSP90 pathway to facilitate HIF alpha proteins hydroxylation. Interacts with HSP90AA1, FLCN, FNIP1 and FNIP2. In terms of processing, proteolytically cleaved by caspase-7 (CASP7) in response to apoptosis, leading to its inactivation. In terms of tissue distribution, detected in testis and ovary, at lower levels in endometrium, myometrium, kidney and lung, and only faintly in spleen, heart and muscle (at protein level). Expressed at high levels in glandular and luminal epithelial cells of the endometrium, but also detected in stromal cells (at protein level).

It localises to the cytoplasm. The enzyme catalyses prostaglandin H2 = prostaglandin E2. It participates in lipid metabolism; prostaglandin biosynthesis. Functionally, cytosolic prostaglandin synthase that catalyzes the oxidoreduction of prostaglandin endoperoxide H2 (PGH2) to prostaglandin E2 (PGE2). Molecular chaperone that localizes to genomic response elements in a hormone-dependent manner and disrupts receptor-mediated transcriptional activation, by promoting disassembly of transcriptional regulatory complexes. Facilitates HIF alpha proteins hydroxylation via interaction with EGLN1/PHD2, leading to recruit EGLN1/PHD2 to the HSP90 pathway. This is Prostaglandin E synthase 3 (PTGES3) from Bos taurus (Bovine).